The sequence spans 231 residues: Flagellar L-ring protein (231 aa).

The signal sequence occupies residues 1–18 (MNRLMIVSLLGIATVLGG). Residue Cys19 is the site of N-palmitoyl cysteine attachment. Cys19 carries S-diacylglycerol cysteine lipidation. Residues 118–141 (LSLSAEYGGSRDAKGDSQAGQSNS) are disordered.

This sequence belongs to the FlgH family. As to quaternary structure, the basal body constitutes a major portion of the flagellar organelle and consists of four rings (L,P,S, and M) mounted on a central rod.

It is found in the cell outer membrane. The protein resides in the bacterial flagellum basal body. Its function is as follows. Assembles around the rod to form the L-ring and probably protects the motor/basal body from shearing forces during rotation. This Pseudomonas paraeruginosa (strain DSM 24068 / PA7) (Pseudomonas aeruginosa (strain PA7)) protein is Flagellar L-ring protein.